Reading from the N-terminus, the 102-residue chain is Small ribosomal subunit protein uS10 (102 aa).

Residues 34-58 (VSGPVPLPTKTLEVPSRKSPDGEGT) are disordered.

The protein belongs to the universal ribosomal protein uS10 family. As to quaternary structure, part of the 30S ribosomal subunit.

Its function is as follows. Involved in the binding of tRNA to the ribosomes. The sequence is that of Small ribosomal subunit protein uS10 from Halobacterium salinarum (strain ATCC 29341 / DSM 671 / R1).